The following is a 536-amino-acid chain: Caspase recruitment domain-containing protein 9 (536 aa).

Serine 2 carries the phosphoserine modification. Aspartate 3, cysteine 10, and histidine 73 together coordinate Zn(2+). Residues 6 to 98 (NDDECWSALE…QLYRKVTGKE (93 aa)) form the CARD domain. The interval 99 to 116 (PARVFSMIIDASGESGLT) is linker. Coiled-coil stretches lie at residues 117-277 (QLLM…HRNS) and 303-420 (SLRK…QLDM). Residue lysine 125 forms a Glycyl lysine isopeptide (Lys-Gly) (interchain with G-Cter in ubiquitin) linkage. Residue threonine 231 is modified to Phosphothreonine. The residue at position 277 (serine 277) is a Phosphoserine. Serine 424, serine 425, serine 431, serine 451, serine 461, serine 483, and serine 498 each carry phosphoserine. Residues 425 to 451 (SDLEDSSPRNSQELSLPQDLEEDAQLS) form a disordered region. Residues 472–536 (KHLSQTHDTV…GSDNTDTEGS (65 aa)) are disordered. Basic and acidic residues predominate over residues 487–502 (PPEKERRRLKESFENY). A phosphothreonine; by CK2 mark is found at threonine 531 and threonine 533.

As to quaternary structure, monomer. Homodimer; homodimerization is mediated by the CARD domain which forms an extensive interaction with the adjacent linker and coiled-coil regions; leads to an autoinhibited state. Homomultimer; polymerizes following activation, forming a nucleating helical template that seeds BCL10-filament formation via a CARD-CARD interaction. Interacts (via CARD domain) with BCL10 (via CARD domain); interaction takes place following CARD9 activation and polymerization, leading to the formation of a filamentous CBM complex assembly. Component of a CBM complex (CARD9-BCL10, MALT1), composed of CARD9, BCL10 and MALT1. Interacts with RASGRF1. Interacts with NOD2 (via NACHT domain); interaction is direct. Interacts with RIPK2. Interacts with VHL; without leading to protein degradation. Phosphorylated at Thr-231 by PRKCD downstream of C-type lectin receptors activation: phosphorylation promotes interaction with BCL10, followed by activation of NF-kappa-B and MAP kinase p38 pathways. Phosphorylated at Thr-531 and Thr-533 by CK2 following interaction with VHL, leading to inhibit the ability to activate NF-kappa-B. Post-translationally, ubiquitinated at Lys-125 via 'Lys-27'-linked ubiquitin by TRIM62 downstream of C-type lectin receptors activation; leading to CARD9 activation, followed by activation of NF-kappa-B and MAP kinase p38 pathways. Deubiquitinated at Lys-125 by USP15, inhibiting CARD9.

The protein resides in the cytoplasm. Maintained in an autoinhibited state via homodimerization in which the CARD domain forms an extensive interaction with the adjacent linker and coiled-coil regions. Activation downstream of C-type lectin receptors, by phosphorylation by PRKCD and/or ubiquitination by TRIM62, triggers disruption of the CARD domain-coiled coil interface, CARD9 homooligomerization and BCL10 recruitment, followed by activation of NF-kappa-B and MAP kinase p38 pathways. Zinc-binding inhibits activation by stabilizing the CARD ground-state conformation and restricting its capacity to form BCL10-nucleating filaments. In terms of biological role, adapter protein that plays a key role in innate immune response against fungi by forming signaling complexes downstream of C-type lectin receptors. CARD9-mediated signals are essential for antifungal immunity against a subset of fungi from the phylum Ascomycota. Transduces signals in myeloid cells downstream of C-type lectin receptors CLEC7A (dectin-1), CLEC6A (dectin-2) and CLEC4E (Mincle), which detect pathogen-associated molecular pattern metabolites (PAMPs), such as fungal carbohydrates, and trigger CARD9 activation. Upon activation, CARD9 homooligomerizes to form a nucleating helical template that recruits BCL10 via CARD-CARD interaction, thereby promoting polymerization of BCL10 and subsequent recruitment of MALT1: this leads to activation of NF-kappa-B and MAP kinase p38 (MAPK11, MAPK12, MAPK13 and/or MAPK14) pathways which stimulate expression of genes encoding pro-inflammatory cytokines and chemokines. CARD9 signaling in antigen-presenting cells links innate sensing of fungi to the activation of adaptive immunity and provides a cytokine milieu that induces the development and subsequent of interleukin 17-producing T helper (Th17) cells. Also involved in activation of myeloid cells via classical ITAM-associated receptors and TLR: required for TLR-mediated activation of MAPK, while it is not required for TLR-induced activation of NF-kappa-B. CARD9 can also be engaged independently of BCL10: forms a complex with RASGRF1 downstream of C-type lectin receptors, which recruits and activates HRAS, leading to ERK activation and the production of cytokines. Acts as an important regulator of the intestinal commensal fungi (mycobiota) component of the gut microbiota. Plays an essential role in antifungal immunity against dissemination of gut fungi: acts by promoting induction of antifungal IgG antibodies response in CX3CR1(+) macrophages to confer protection against disseminated C.albicans or C.auris infection. Also mediates immunity against other pathogens, such as certain bacteria, viruses and parasites; CARD9 signaling is however redundant with other innate immune responses. In response to L.monocytogenes infection, required for the production of inflammatory cytokines activated by intracellular peptidoglycan: acts by connecting NOD2 recognition of peptidoglycan to downstream activation of MAP kinases (MAPK) without activating NF-kappa-B. In Rattus norvegicus (Rat), this protein is Caspase recruitment domain-containing protein 9.